The sequence spans 159 residues: Ribosomal RNA large subunit methyltransferase H (159 aa).

Residues Leu-76, Gly-108, and Phe-127–Leu-132 contribute to the S-adenosyl-L-methionine site.

It belongs to the RNA methyltransferase RlmH family. In terms of assembly, homodimer.

The protein resides in the cytoplasm. It catalyses the reaction pseudouridine(1915) in 23S rRNA + S-adenosyl-L-methionine = N(3)-methylpseudouridine(1915) in 23S rRNA + S-adenosyl-L-homocysteine + H(+). Its function is as follows. Specifically methylates the pseudouridine at position 1915 (m3Psi1915) in 23S rRNA. The sequence is that of Ribosomal RNA large subunit methyltransferase H from Streptococcus equi subsp. zooepidemicus (strain H70).